A 644-amino-acid chain; its full sequence is Exoribonuclease 2 (644 aa).

The 328-residue stretch at 189–516 (RQDLTALNFV…NHRLLKAVIK (328 aa)) folds into the RNB domain. An S1 motif domain is found at 561 to 643 (NTRFAAEIID…ETRSIIARPA (83 aa)).

This sequence belongs to the RNR ribonuclease family. RNase II subfamily.

Its subcellular location is the cytoplasm. It catalyses the reaction Exonucleolytic cleavage in the 3'- to 5'-direction to yield nucleoside 5'-phosphates.. In terms of biological role, involved in mRNA degradation. Hydrolyzes single-stranded polyribonucleotides processively in the 3' to 5' direction. The sequence is that of Exoribonuclease 2 from Salmonella dublin (strain CT_02021853).